A 167-amino-acid polypeptide reads, in one-letter code: NAD(P)H-quinone oxidoreductase subunit I, chloroplastic (167 aa).

2 consecutive 4Fe-4S ferredoxin-type domains span residues 55 to 84 (GRIH…VDWK) and 95 to 124 (LNYS…MTEE). Residues cysteine 64, cysteine 67, cysteine 70, cysteine 74, cysteine 104, cysteine 107, cysteine 110, and cysteine 114 each contribute to the [4Fe-4S] cluster site.

This sequence belongs to the complex I 23 kDa subunit family. As to quaternary structure, NDH is composed of at least 16 different subunits, 5 of which are encoded in the nucleus. [4Fe-4S] cluster serves as cofactor.

The protein localises to the plastid. The protein resides in the chloroplast thylakoid membrane. It catalyses the reaction a plastoquinone + NADH + (n+1) H(+)(in) = a plastoquinol + NAD(+) + n H(+)(out). It carries out the reaction a plastoquinone + NADPH + (n+1) H(+)(in) = a plastoquinol + NADP(+) + n H(+)(out). Functionally, NDH shuttles electrons from NAD(P)H:plastoquinone, via FMN and iron-sulfur (Fe-S) centers, to quinones in the photosynthetic chain and possibly in a chloroplast respiratory chain. The immediate electron acceptor for the enzyme in this species is believed to be plastoquinone. Couples the redox reaction to proton translocation, and thus conserves the redox energy in a proton gradient. This Citrus sinensis (Sweet orange) protein is NAD(P)H-quinone oxidoreductase subunit I, chloroplastic.